Consider the following 354-residue polypeptide: Carbamoyl phosphate synthase small chain (354 aa).

The tract at residues 1–167 is CPSase; the sequence is MEAVLILEDG…KEPKIHKTAN (167 aa). L-glutamine is bound by residues Ser-45, Gly-219, and Gly-221. The Glutamine amidotransferase type-1 domain maps to 171-354; it reads RCVLIDCGVK…DEMIKLKDRK (184 aa). The active-site Nucleophile is Cys-246. The L-glutamine site is built by Leu-247, Gln-250, Asn-288, Gly-290, and Phe-291. Residues His-330 and Glu-332 contribute to the active site.

This sequence belongs to the CarA family. Composed of two chains; the small (or glutamine) chain promotes the hydrolysis of glutamine to ammonia, which is used by the large (or ammonia) chain to synthesize carbamoyl phosphate. Tetramer of heterodimers (alpha,beta)4.

It carries out the reaction hydrogencarbonate + L-glutamine + 2 ATP + H2O = carbamoyl phosphate + L-glutamate + 2 ADP + phosphate + 2 H(+). The enzyme catalyses L-glutamine + H2O = L-glutamate + NH4(+). The protein operates within amino-acid biosynthesis; L-arginine biosynthesis; carbamoyl phosphate from bicarbonate: step 1/1. It participates in pyrimidine metabolism; UMP biosynthesis via de novo pathway; (S)-dihydroorotate from bicarbonate: step 1/3. In terms of biological role, small subunit of the glutamine-dependent carbamoyl phosphate synthetase (CPSase). CPSase catalyzes the formation of carbamoyl phosphate from the ammonia moiety of glutamine, carbonate, and phosphate donated by ATP, constituting the first step of 2 biosynthetic pathways, one leading to arginine and/or urea and the other to pyrimidine nucleotides. The small subunit (glutamine amidotransferase) binds and cleaves glutamine to supply the large subunit with the substrate ammonia. This chain is Carbamoyl phosphate synthase small chain, found in Methanocaldococcus jannaschii (strain ATCC 43067 / DSM 2661 / JAL-1 / JCM 10045 / NBRC 100440) (Methanococcus jannaschii).